Reading from the N-terminus, the 254-residue chain is 3-deoxy-manno-octulosonate cytidylyltransferase (254 aa).

This sequence belongs to the KdsB family.

The protein resides in the cytoplasm. It carries out the reaction 3-deoxy-alpha-D-manno-oct-2-ulosonate + CTP = CMP-3-deoxy-beta-D-manno-octulosonate + diphosphate. The protein operates within nucleotide-sugar biosynthesis; CMP-3-deoxy-D-manno-octulosonate biosynthesis; CMP-3-deoxy-D-manno-octulosonate from 3-deoxy-D-manno-octulosonate and CTP: step 1/1. Its pathway is bacterial outer membrane biogenesis; lipopolysaccharide biosynthesis. Activates KDO (a required 8-carbon sugar) for incorporation into bacterial lipopolysaccharide in Gram-negative bacteria. In Haemophilus influenzae (strain PittEE), this protein is 3-deoxy-manno-octulosonate cytidylyltransferase.